We begin with the raw amino-acid sequence, 311 residues long: Natural killer cell receptor 2B4 (311 aa).

Positions 1 to 19 are cleaved as a signal peptide; that stretch reads MLQQTVLLSLFLLLRAHQG. Residues 20 to 223 lie on the Extracellular side of the membrane; that stretch reads QDCADSSEEV…CQSVPSKFNY (204 aa). C22 and C118 are joined by a disulfide. Ig-like domains lie at 22 to 128 and 131 to 215; these read CADS…LIFD and ETPH…QSCQ. N-linked (GlcNAc...) asparagine glycans are attached at residues N101, N144, N160, N183, N196, and N205. A disulfide bond links C153 and C195. The helical transmembrane segment at 224 to 247 threads the bilayer; sequence LPFMVSIGILVKFFHGAIDCFCVW. At 248-311 the chain is on the cytoplasmic side; it reads NRKRKQSQSI…RRLFQFINRS (64 aa). The disordered stretch occupies residues 275–301; that stretch reads RDQRGHFRASGSSSDVRGDERGQRESD. A compositionally biased stretch (basic and acidic residues) spans 290-301; the sequence is VRGDERGQRESD.

In terms of assembly, interacts with CD48. Interacts (via phosphorylated ITSM 1-4) with SH2D1A (via SH2 domain); SH2D1A probably mediates association with FYN. Interacts (via phosphorylated ITSM 3) with PTPN11/SHP-2, INPP5D/SHIP1, PTPN6/SHP-1 and CSK; binding of SH2D1A/SAP prevents association with PTPN11, PTPN6 and CSK; conflictingly a similar association has been described for phosphorylated ITSM 1 also including GRB2 and PLCG1. Interacts weakly (via phosphorylated ITSM 2) with PTPN11/SHP-2 and CSK. Interacts with SH2D1B. Interacts with PIK3R1; PI3K recruits SH2D1A. Interacts with MHC class I proteins; the interaction is proposed to prevent self-killing of NK cells. Post-translationally, N-linked glycosylation is essential for the binding to its ligand CD48. Also O-glycosylated, in contrast, O-linked sialylation has a negative impact on ligand binding. In terms of processing, phosphorylated by FYN and CSK on tyrosine residues following activation. Coligation with inhibitory receptors such as KIR2DL1 inhibits phosphorylation upon contact of NK cells with sensitive target cells.

The protein resides in the membrane. It localises to the cell membrane. The protein localises to the membrane raft. Its function is as follows. Heterophilic receptor of the signaling lymphocytic activation molecule (SLAM) family; its ligand is CD48. SLAM receptors triggered by homo- or heterotypic cell-cell interactions are modulating the activation and differentiation of a wide variety of immune cells and thus are involved in the regulation and interconnection of both innate and adaptive immune response. Activities are controlled by presence or absence of small cytoplasmic adapter proteins, SH2D1A/SAP and/or SH2D1B/EAT-2. Acts as activating natural killer (NK) cell receptor. Activating function implicates association with SH2D1A and FYN. Downstreaming signaling involves predominantly VAV1, and, to a lesser degree, INPP5D/SHIP1 and CBL. Signal attenuation in the absence of SH2D1A is proposed to be dependent on INPP5D and to a lesser extent PTPN6/SHP-1 and PTPN11/SHP-2. Stimulates NK cell cytotoxicity, production of IFN-gamma and granule exocytosis. Optimal expansion and activation of NK cells seems to be dependent on the engagement of CD244 with CD48 expressed on neighboring NK cells. Acts as costimulator in NK activation by enhancing signals by other NK receptors such as NCR3 and NCR1. At early stages of NK cell differentiation may function as an inhibitory receptor possibly ensuring the self-tolerance of developing NK cells. Involved in the regulation of CD8(+) T-cell proliferation; expression on activated T-cells and binding to CD48 provides costimulatory-like function for neighboring T-cells. Inhibits inflammatory responses in dendritic cells (DCs). The chain is Natural killer cell receptor 2B4 (Cd244) from Rattus norvegicus (Rat).